Here is a 512-residue protein sequence, read N- to C-terminus: Protein SHC1 (512 aa).

Over residues 101-113 (EQDEFENDVEDDA) the composition is skewed to acidic residues. Disordered stretches follow at residues 101 to 122 (EQDE…EKSQ) and 144 to 165 (DGNS…SVAL). Sel1-like repeat units lie at residues 318-353 (PDAQ…KRLH), 354-389 (IESV…TKNH), 390-429 (PAAM…SMAS), and 433-470 (CGAP…ALGH).

This sequence belongs to the SKT5 family.

The protein localises to the cytoplasm. The protein resides in the cytoplasmic granule membrane. Its function is as follows. Required for the activation of chitin synthase III (CHS3) activity during the sporulation process. This is Protein SHC1 (SHC1) from Saccharomyces cerevisiae (strain YJM789) (Baker's yeast).